Reading from the N-terminus, the 930-residue chain is MEGEGAPSWRGGPGGLIRELCRSFGHYNRHLARLQHNLRETKKFFRDVKYSQGNLFASGAAIGEGSPSGAGGGGTRDGGQNFISFPRHEEEHLQQTVSWHPCLLILGQNCNAKCQLLNILLGEKLLPTTKISSEENCKRRRIRFTHGTQTRVSLALPEQYELVHMMAAHRGHWDTIPEEDLEIRGDSEDPAHRIAELEVVLPYSLLKEVDVVVAPCRGFQSAEATLEEYMNQVLLIVIFAISEAELSSSDENELREIKEKFSLPIFFFKVPESGVELISPKKTDNEKSSLYCQLMDLEYLSTNHCSCGAPSPDAVAQSMLVEQLEKLRLLSTFSRQVLQKHLVEAATSLNEVHCRCLNIFINQAFDMQRDLQITPKRLEYTRRKENELYESLMNIANRKQEEMKDMIIETLSNMKEELLEDAANMEFKDIIIPENGEPVSSKDIKCCIKQIQELIISRLNQAVANKLISSVDYLRESFVGTLERCLKSLEESWEVSVHPARSLEKSKDVSVHITSNYLKQILNAAYHVEVTFHSGSTVTRMLWEQIKQIIQRITWVSPPAITSDWKRKVAQDAIESLSASKLAKSICSQFRTRLNSSHEAFAASLRQLEDGHSGRLEKTEDLWLKVRKDHAPRLARLSLESRSLQDVLLHGKPKLGRELGRGQYGVVYLCDSWGGHFPCALKSVVPPDEKHWNDLALEFHYMRSLQSHERLVDLHGSVIDYGYGGGSSIAVLLIMERLHRDLYTGLKAGLELETRLQIALDVVEGIRYLHSQGLVHRDIKLKNVLLDKKNRAKITDLGFCKPEAMMSGSIVGTPIHMAPELFTGKYDNSVDVYAFGILFWYICSGHVKLPEAFERCASKDHLWNNVRRGVRPERLPVFDEECWQLMEACWDGDSSQRPLLGIVQPMLQGIMDRLCKSSSEHPNKGLDDST.

A coiled-coil region spans residues 383 to 428; sequence RKENELYESLMNIANRKQEEMKDMIIETLSNMKEELLEDAANMEFK. Residues 653–907 enclose the Protein kinase domain; the sequence is PKLGRELGRG…PLLGIVQPML (255 aa). ATP is bound by residues 659–667 and lysine 682; that span reads LGRGQYGVV. Residue aspartate 778 is the Proton acceptor of the active site.

Belongs to the protein kinase superfamily. Ser/Thr protein kinase family. In terms of tissue distribution, widely expressed with the highest expression in brain and ovary.

Its subcellular location is the cytoplasm. The protein resides in the cell membrane. It is found in the apical cell membrane. The protein localises to the basolateral cell membrane. It localises to the cell junction. The enzyme catalyses L-seryl-[protein] + ATP = O-phospho-L-seryl-[protein] + ADP + H(+). It catalyses the reaction L-threonyl-[protein] + ATP = O-phospho-L-threonyl-[protein] + ADP + H(+). It carries out the reaction L-tyrosyl-[protein] + ATP = O-phospho-L-tyrosyl-[protein] + ADP + H(+). Functionally, may act as a positive regulator of ERK phosphorylation downstream of fibroblast growth factor-receptor activation. May induce both caspase-dependent apoptosis and caspase-independent cell death. This is Dual serine/threonine and tyrosine protein kinase (DSTYK) from Gallus gallus (Chicken).